A 277-amino-acid polypeptide reads, in one-letter code: Thiazole synthase (277 aa).

Lys-119 functions as the Schiff-base intermediate with DXP in the catalytic mechanism. Residues Gly-180, 206–207 (AG), and 228–229 (NT) each bind 1-deoxy-D-xylulose 5-phosphate.

It belongs to the ThiG family. As to quaternary structure, homotetramer. Forms heterodimers with either ThiH or ThiS.

The protein resides in the plastid. It localises to the chloroplast. It carries out the reaction [ThiS sulfur-carrier protein]-C-terminal-Gly-aminoethanethioate + 2-iminoacetate + 1-deoxy-D-xylulose 5-phosphate = [ThiS sulfur-carrier protein]-C-terminal Gly-Gly + 2-[(2R,5Z)-2-carboxy-4-methylthiazol-5(2H)-ylidene]ethyl phosphate + 2 H2O + H(+). The protein operates within cofactor biosynthesis; thiamine diphosphate biosynthesis. Its function is as follows. Catalyzes the rearrangement of 1-deoxy-D-xylulose 5-phosphate (DXP) to produce the thiazole phosphate moiety of thiamine. Sulfur is provided by the thiocarboxylate moiety of the carrier protein ThiS. In vitro, sulfur can be provided by H(2)S. The sequence is that of Thiazole synthase from Porphyra purpurea (Red seaweed).